The chain runs to 505 residues: Glycerol kinase 2 (505 aa).

Threonine 17 serves as a coordination point for ADP. Threonine 17, threonine 18, and serine 19 together coordinate ATP. Threonine 17 serves as a coordination point for sn-glycerol 3-phosphate. Residue arginine 21 participates in ADP binding. Sn-glycerol 3-phosphate-binding residues include arginine 87, glutamate 88, tyrosine 139, and aspartate 249. Arginine 87, glutamate 88, tyrosine 139, aspartate 249, and glutamine 250 together coordinate glycerol. ADP contacts are provided by threonine 271 and glycine 314. ATP-binding residues include threonine 271, glycine 314, glutamine 318, and glycine 415. Positions 415 and 419 each coordinate ADP.

It belongs to the FGGY kinase family.

It carries out the reaction glycerol + ATP = sn-glycerol 3-phosphate + ADP + H(+). It functions in the pathway polyol metabolism; glycerol degradation via glycerol kinase pathway; sn-glycerol 3-phosphate from glycerol: step 1/1. With respect to regulation, inhibited by fructose 1,6-bisphosphate (FBP). Its function is as follows. Key enzyme in the regulation of glycerol uptake and metabolism. Catalyzes the phosphorylation of glycerol to yield sn-glycerol 3-phosphate. The chain is Glycerol kinase 2 from Pseudomonas aeruginosa (strain ATCC 15692 / DSM 22644 / CIP 104116 / JCM 14847 / LMG 12228 / 1C / PRS 101 / PAO1).